The chain runs to 526 residues: O-phosphoserine--tRNA(Cys) ligase (526 aa).

Substrate-binding positions include 189–191 (HMT), 234–236 (SAS), 276–277 (YY), and Asn319.

Belongs to the class-II aminoacyl-tRNA synthetase family. O-phosphoseryl-tRNA(Cys) synthetase subfamily. Homotetramer. Interacts with SepCysS.

The enzyme catalyses tRNA(Cys) + O-phospho-L-serine + ATP = O-phospho-L-seryl-tRNA(Cys) + AMP + diphosphate. Functionally, catalyzes the attachment of O-phosphoserine (Sep) to tRNA(Cys). The protein is O-phosphoserine--tRNA(Cys) ligase of Methanocorpusculum labreanum (strain ATCC 43576 / DSM 4855 / Z).